The sequence spans 346 residues: Flap endonuclease 1 (346 aa).

The N-domain stretch occupies residues 1–102; that stretch reads MGVTELGKLI…AEIEERRKTR (102 aa). Residues aspartate 31, aspartate 84, glutamate 156, glutamate 158, aspartate 177, aspartate 179, and aspartate 239 each coordinate Mg(2+). Positions 120–261 are I-domain; sequence DVAKYAKRAV…KALKLIWEFG (142 aa).

It belongs to the XPG/RAD2 endonuclease family. FEN1 subfamily. As to quaternary structure, interacts with PCNA. PCNA stimulates the nuclease activity without altering cleavage specificity. Requires Mg(2+) as cofactor.

Its function is as follows. Structure-specific nuclease with 5'-flap endonuclease and 5'-3' exonuclease activities involved in DNA replication and repair. During DNA replication, cleaves the 5'-overhanging flap structure that is generated by displacement synthesis when DNA polymerase encounters the 5'-end of a downstream Okazaki fragment. Binds the unpaired 3'-DNA end and kinks the DNA to facilitate 5' cleavage specificity. Cleaves one nucleotide into the double-stranded DNA from the junction in flap DNA, leaving a nick for ligation. Also involved in the base excision repair (BER) pathway. Acts as a genome stabilization factor that prevents flaps from equilibrating into structures that lead to duplications and deletions. Also possesses 5'-3' exonuclease activity on nicked or gapped double-stranded DNA. The sequence is that of Flap endonuclease 1 from Pyrobaculum aerophilum (strain ATCC 51768 / DSM 7523 / JCM 9630 / CIP 104966 / NBRC 100827 / IM2).